The sequence spans 247 residues: Triosephosphate isomerase (247 aa).

10-12 (NWK) provides a ligand contact to substrate. H92 serves as the catalytic Electrophile. Residue E164 is the Proton acceptor of the active site. Residues G170, S209, and 230–231 (GG) each bind substrate.

This sequence belongs to the triosephosphate isomerase family. Homodimer.

Its subcellular location is the cytoplasm. The enzyme catalyses D-glyceraldehyde 3-phosphate = dihydroxyacetone phosphate. Its pathway is carbohydrate biosynthesis; gluconeogenesis. It functions in the pathway carbohydrate degradation; glycolysis; D-glyceraldehyde 3-phosphate from glycerone phosphate: step 1/1. Its function is as follows. Involved in the gluconeogenesis. Catalyzes stereospecifically the conversion of dihydroxyacetone phosphate (DHAP) to D-glyceraldehyde-3-phosphate (G3P). The chain is Triosephosphate isomerase from Alcanivorax borkumensis (strain ATCC 700651 / DSM 11573 / NCIMB 13689 / SK2).